The following is a 146-amino-acid chain: UPF0178 protein BAMEG_1545 (146 aa).

Belongs to the UPF0178 family.

The protein is UPF0178 protein BAMEG_1545 of Bacillus anthracis (strain CDC 684 / NRRL 3495).